A 676-amino-acid chain; its full sequence is Portal protein (676 aa).

Positions 383–404 are disordered; it reads PGFGKGGNSRGSAGQDQGGRAP. The interval 422-443 is putative leucine zipper motif; that stretch reads LEGYINNLFGTIERLRETNAGL. Residues 627–676 are disordered; that stretch reads PPPSPVGADFRPGASPRGRSRSRSPGRTARGAPDQGGGIGHRDGRRDGRR. Residues 666 to 676 are compositionally biased toward basic and acidic residues; it reads GHRDGRRDGRR.

The protein belongs to the herpesviridae portal protein family. In terms of assembly, homododecamerizes. Interacts with terminase subunits TRM1 and TRM3.

The protein resides in the virion. Its subcellular location is the host nucleus. Its function is as follows. Forms a portal in the viral capsid through which viral DNA is translocated during DNA packaging. Assembles as a dodecamer at a single fivefold axe of the T=16 icosahedric capsid. Binds to the molecular motor that translocates the viral DNA, termed terminase. This is Portal protein (UL6) from Human herpesvirus 1 (strain 17) (HHV-1).